The primary structure comprises 184 residues: dCTP deaminase (184 aa).

DCTP is bound by residues 107–112 (KSTYAR), 131–133 (TLE), Q152, Y166, and Q176. E133 (proton donor/acceptor) is an active-site residue.

It belongs to the dCTP deaminase family. As to quaternary structure, homotrimer.

The enzyme catalyses dCTP + H2O + H(+) = dUTP + NH4(+). Its pathway is pyrimidine metabolism; dUMP biosynthesis; dUMP from dCTP (dUTP route): step 1/2. Its function is as follows. Catalyzes the deamination of dCTP to dUTP. In Rhizorhabdus wittichii (strain DSM 6014 / CCUG 31198 / JCM 15750 / NBRC 105917 / EY 4224 / RW1) (Sphingomonas wittichii), this protein is dCTP deaminase.